The following is a 185-amino-acid chain: ADP-ribosylation factor-like protein 2 (185 aa).

Gly-2 carries the N-myristoyl glycine lipid modification. Residues 23–30, 66–70, and 125–128 contribute to the GTP site; these read GLDNSGKT, DVGGQ, and NKQD.

This sequence belongs to the small GTPase superfamily. Arf family. In terms of assembly, supercomplex made of cofactors A to E. Cofactors A and D function by capturing and stabilizing tubulin in a quasi-native conformation. Cofactor E binds to the cofactor D-tubulin complex; interaction with cofactor C then causes the release of tubulin polypeptides that are committed to the native state. As to expression, expressed in seedlings, leaves, roots and inflorescences.

It localises to the cytoplasm. Functionally, has a role in the cofactor-dependent pathway of microtubule biogenesis. Not essential for cell viability. May play a regulatory role in sequestring TFCD. The chain is ADP-ribosylation factor-like protein 2 (ARL2) from Arabidopsis thaliana (Mouse-ear cress).